The chain runs to 275 residues: Ribosomal RNA small subunit methyltransferase A (275 aa).

S-adenosyl-L-methionine contacts are provided by asparagine 19, leucine 21, glycine 46, glutamate 71, aspartate 94, and asparagine 117.

This sequence belongs to the class I-like SAM-binding methyltransferase superfamily. rRNA adenine N(6)-methyltransferase family. RsmA subfamily.

The protein localises to the cytoplasm. The enzyme catalyses adenosine(1518)/adenosine(1519) in 16S rRNA + 4 S-adenosyl-L-methionine = N(6)-dimethyladenosine(1518)/N(6)-dimethyladenosine(1519) in 16S rRNA + 4 S-adenosyl-L-homocysteine + 4 H(+). Its function is as follows. Specifically dimethylates two adjacent adenosines (A1518 and A1519) in the loop of a conserved hairpin near the 3'-end of 16S rRNA in the 30S particle. May play a critical role in biogenesis of 30S subunits. The protein is Ribosomal RNA small subunit methyltransferase A of Burkholderia thailandensis (strain ATCC 700388 / DSM 13276 / CCUG 48851 / CIP 106301 / E264).